Reading from the N-terminus, the 431-residue chain is Fibrinogen C domain-containing protein 1 (431 aa).

The Cytoplasmic segment spans residues 1–3; it reads MLC. A helical; Signal-anchor for type II membrane protein transmembrane segment spans residues 4–24; it reads TVLLALAVLLAVAVTGAVLFL. The Extracellular segment spans residues 25 to 431; the sequence is NHTHTPGTAP…MKIRPVREDR (407 aa). A Fibrinogen C-terminal domain is found at 205–428; it reads CATGSRPRDC…FSEMKIRPVR (224 aa). Cysteine 214 and cysteine 243 are oxidised to a cystine. Residue asparagine 310 is glycosylated (N-linked (GlcNAc...) asparagine). Aspartate 363 and aspartate 365 together coordinate Ca(2+). An intrachain disulfide couples cysteine 371 to cysteine 384.

Homotetramer; disulfide-linked.

The protein resides in the membrane. Its function is as follows. Acetyl group-binding receptor which shows a high-affinity and calcium-dependent binding to acetylated structures such as chitin, some N-acetylated carbohydrates, and amino acids, but not to their non-acetylated counterparts. Can facilitate the endocytosis of acetylated components. The sequence is that of Fibrinogen C domain-containing protein 1 (FIBCD1) from Macaca fascicularis (Crab-eating macaque).